The sequence spans 933 residues: SGGFDFGVGLGPGPMGLMGPRGPPGASGAPGPQGFQGPAGEPGEPGQTGPAGARPGKAGEDGHPGKPGRPGERGVVGPQGARGFPGTPGLPGFKGIGARGLPGERGRVGAPGPAGARGSDGSVGPVGPAGPIGSAGPPGFPGAPGPKGELGPVGNPGPAGPAGPRGEQGLPGVSGPVGPPGNPGANGLTGAKGAAGLPGVAGAPGLPGPRGIPGPVGAVGATGARGLVGEPGPAGSKGESGNKGEPGSAGPQGPPGPSGEEGKRGPNGESGSTGPTGPPGLRGGPGSRGLPGADGRAGVMGPAGRGASGPAGVRGRPGEPGLMGPRGLPGSPGNTGPAGKEGPVGLPGIDGRPGPVGPAGRGEAGNIGFPGPKGPTGDPGKAGEKGHAGLAGNRGAPGPDGNNGAQGPPGLQGVQGGKGEQGPAGPPGFQGLPGPGTTGEAGKPGERGIHGEFGLPGPAGPRGERGPPGESGAAGPVGPIGSRGPSGPPGPDGNKGEPGVVGAPGTAGPAGSGGLPGERGAAGIPGGKGEKGETGLRGEVGTTGRDGARGAPGAVGAPGPAGATGDRGEAGAAGPAGPAGPRGSPGERGEVGPAGPNGFAGPAGAAGQPGAKGERKGPKGENGIVGPTGPVGAAGPSGPNGAPGPAGGRGDGGPPGLTGFPGAAGRTGPPGPSGITGPPGPPGAAGKEGLRGPRGDQGPVGRTGETGAGGPPGFAGEKGPSGEPGTAGPPGTAGPQGLLGAPGILGLPGSRGERGLPGVAGAVGEPGPLGISGPPGARGPSGAVGPGVNGAPGEAGRDGLPGHKGERGYAGNAGPVGAAGAPGPHGSVGPAGKHGNRGEPGPAGSVGPVGAVGPRGPSGPQGVRGDKGEGDKGPRGLPGGLQGLPGLAGQHGDQGSPGPVGPAGPRGPAGPSGPAGKDGRTGHPGAVGPAGVR.

Gly residues predominate over residues 1-16 (SGGFDFGVGLGPGPMG). Disordered regions lie at residues 1 to 191 (SGGF…LTGA) and 206 to 933 (LPGP…AGVR). Positions 17-53 (LMGPRGPPGASGAPGPQGFQGPAGEPGEPGQTGPAGA) are enriched in low complexity. 2 positions are modified to 4-hydroxyproline: Pro24 and Pro30. Residues 57–72 (KAGEDGHPGKPGRPGE) show a composition bias toward basic and acidic residues. Lys94 carries the post-translational modification 5-hydroxylysine; alternate. The O-linked (Gal...) hydroxylysine; alternate glycan is linked to Lys94. Composition is skewed to low complexity over residues 108 to 137 (VGAP…SAGP), 162 to 176 (AGPR…VSGP), and 213 to 228 (PGPV…RGLV). The segment covering 280-289 (GLRGGPGSRG) has biased composition (gly residues). 4-hydroxyproline occurs at positions 317 and 320. Positions 413-422 (GVQGGKGEQG) are enriched in gly residues. Composition is skewed to low complexity over residues 468 to 485 (PGES…SRGP) and 497 to 507 (EPGVVGAPGTA). Residues 508–517 (GPAGSGGLPG) are compositionally biased toward gly residues. 3 stretches are compositionally biased toward low complexity: residues 540 to 584 (VGTT…PRGS), 591 to 611 (VGPA…QPGA), and 627 to 640 (PTGP…SGPN). Residues 644–656 (GPAGGRGDGGPPG) show a composition bias toward gly residues. Positions 657–667 (LTGFPGAAGRT) are enriched in low complexity. Residues 704-713 (GETGAGGPPG) are compositionally biased toward gly residues. 2 stretches are compositionally biased toward low complexity: residues 721–748 (SGEP…LGLP) and 756–781 (LPGV…RGPS). A compositionally biased stretch (basic and acidic residues) spans 795–807 (AGRDGLPGHKGER). Low complexity-rich tracts occupy residues 809–831 (YAGN…VGPA) and 840–860 (PGPA…PSGP). The span at 864–874 (RGDKGEGDKGP) shows a compositional bias: basic and acidic residues.

Belongs to the fibrillar collagen family. As to quaternary structure, trimers of one alpha 2(I) and two alpha 1(I) chains. Interacts (via C-terminus) with TMEM131 (via PapD-L domain); the interaction is direct and is involved in assembly and TRAPPIII ER-to-Golgi transport complex-dependent secretion of collagen. Prolines at the third position of the tripeptide repeating unit (G-X-Y) are hydroxylated in some or all of the chains. In terms of tissue distribution, expressed in bones.

The protein resides in the secreted. The protein localises to the extracellular space. It is found in the extracellular matrix. Functionally, type I collagen is a member of group I collagen (fibrillar forming collagen). The polypeptide is Collagen alpha-2(I) chain (Glyptodon sp. (strain SLP-2019) (Giant armadillo)).